The following is a 167-amino-acid chain: Ubiquitin-fold modifier-conjugating enzyme 1 (167 aa).

The active-site Glycyl thioester intermediate is the Cys116. Lys122 is covalently cross-linked (Glycyl lysine isopeptide (Lys-Gly) (interchain with G-Cter in UFM1)).

It belongs to the ubiquitin-conjugating enzyme family. UFC1 subfamily. As to quaternary structure, interacts with UBA5 (via C-terminus). Interacts with UFL1. Interacts with UFM1. Interacts with KIRREL3. In terms of processing, ufmylated at Lys-122. Deufmylated by UFSP1.

Its function is as follows. E2-like enzyme which specifically catalyzes the second step in ufmylation. Accepts the ubiquitin-like modifier UFM1 from the E1 enzyme UBA5 and forms an intermediate with UFM1 via a thioester linkage. Ufmylation is involved in various processes, such as ribosome recycling, response to DNA damage, interferon response or reticulophagy (also called ER-phagy). The protein is Ubiquitin-fold modifier-conjugating enzyme 1 of Bos taurus (Bovine).